Here is a 511-residue protein sequence, read N- to C-terminus: Maturase K (511 aa).

This sequence belongs to the intron maturase 2 family. MatK subfamily.

Its subcellular location is the plastid. It is found in the chloroplast. Usually encoded in the trnK tRNA gene intron. Probably assists in splicing its own and other chloroplast group II introns. This chain is Maturase K, found in Lolium perenne (Perennial ryegrass).